The sequence spans 77 residues: MAKFANYLMLFLLVASLVMLEAQSSDTIKVPDLGKRLLMNRDPNGIPCAESCVWIPCTITALMGCSCKNNVCYNNEL.

A signal peptide spans Met1–Ser24. A propeptide spans Ser25–Asn44 (removed in mature form). Residues Gly45–Asn75 constitute a cross-link (cyclopeptide (Gly-Asn)). 3 cysteine pairs are disulfide-bonded: Cys48–Cys65, Cys52–Cys67, and Cys57–Cys72. Met63 is subject to Methionine sulfoxide; in form chassatide chaC2A. A propeptide spans Glu76–Leu77 (removed in mature form).

Belongs to the cyclotide family. Bracelet subfamily. Post-translationally, this is a cyclic peptide. As to expression, expressed in fruit, pedicel and stem but not in leaf and root (at protein level).

In terms of biological role, chassatide C2: Probably participates in a plant defense mechanism. Has no activity against bacteria up to a concentration of 80 uM. Has cytotoxic but no hemolytic activity. Functionally, chassatide C2A: Probably participates in a plant defense mechanism. Has no activity against bacteria up to a concentration of 80 uM. Has no cytotoxic and no hemolytic activity. The protein is Chassatide C2 of Chassalia chartacea (Chassalia curviflora).